The following is a 122-amino-acid chain: Large ribosomal subunit protein uL14 (122 aa).

This sequence belongs to the universal ribosomal protein uL14 family. As to quaternary structure, part of the 50S ribosomal subunit. Forms a cluster with proteins L3 and L19. In the 70S ribosome, L14 and L19 interact and together make contacts with the 16S rRNA in bridges B5 and B8.

In terms of biological role, binds to 23S rRNA. Forms part of two intersubunit bridges in the 70S ribosome. This is Large ribosomal subunit protein uL14 from Psychromonas ingrahamii (strain DSM 17664 / CCUG 51855 / 37).